We begin with the raw amino-acid sequence, 155 residues long: Protein-export protein SecB (155 aa).

The protein belongs to the SecB family. As to quaternary structure, homotetramer, a dimer of dimers. One homotetramer interacts with 1 SecA dimer.

Its subcellular location is the cytoplasm. In terms of biological role, one of the proteins required for the normal export of preproteins out of the cell cytoplasm. It is a molecular chaperone that binds to a subset of precursor proteins, maintaining them in a translocation-competent state. It also specifically binds to its receptor SecA. This Paramagnetospirillum magneticum (strain ATCC 700264 / AMB-1) (Magnetospirillum magneticum) protein is Protein-export protein SecB.